A 624-amino-acid chain; its full sequence is Chaperone protein HtpG (624 aa).

The tract at residues 1–336 (MKGQETRGFQ…SSDLPLNVSR (336 aa)) is a; substrate-binding. The segment at 337 to 552 (EILQDSTVTR…ADEMSTQMAK (216 aa)) is b. Residues 553-624 (LFAAAGQKVP…IRRMNQLLVS (72 aa)) are c.

Belongs to the heat shock protein 90 family. Homodimer.

It localises to the cytoplasm. Its function is as follows. Molecular chaperone. Has ATPase activity. The sequence is that of Chaperone protein HtpG from Shigella flexneri.